Reading from the N-terminus, the 765-residue chain is Protein suppressor of forked (765 aa).

HAT repeat units follow at residues 46-78 (RPIH…MEMR), 80-111 (RYYE…YVKE), 118-153 (THKE…FLRG), 164-197 (QKIT…FEQN), 230-262 (GLNR…YEKS), 387-420 (LKYE…FARR), and 491-527 (NEDN…FESN). Disordered stretches follow at residues 595–615 (GAQS…PPLP) and 727–747 (RRRR…TAVP). Ser738 bears the Phosphoserine mark.

As to quaternary structure, probably interacts with an RNA-binding protein.

It localises to the nucleus. Functionally, essential protein, may play a role in mRNA production or stability. The polypeptide is Protein suppressor of forked (su(f)) (Drosophila melanogaster (Fruit fly)).